The sequence spans 362 residues: Alanine racemase (362 aa).

The Proton acceptor; specific for D-alanine role is filled by Lys33. An N6-(pyridoxal phosphate)lysine modification is found at Lys33. Arg129 provides a ligand contact to substrate. Tyr254 acts as the Proton acceptor; specific for L-alanine in catalysis. A substrate-binding site is contributed by Met302.

The protein belongs to the alanine racemase family. Pyridoxal 5'-phosphate serves as cofactor.

The enzyme catalyses L-alanine = D-alanine. It functions in the pathway amino-acid biosynthesis; D-alanine biosynthesis; D-alanine from L-alanine: step 1/1. Catalyzes the interconversion of L-alanine and D-alanine. May also act on other amino acids. This chain is Alanine racemase (alr), found in Xylella fastidiosa (strain 9a5c).